A 289-amino-acid polypeptide reads, in one-letter code: Bifunctional protein FolD (289 aa).

NADP(+) is bound by residues 166-168 (GRS), S191, and I232.

It belongs to the tetrahydrofolate dehydrogenase/cyclohydrolase family. As to quaternary structure, homodimer.

It catalyses the reaction (6R)-5,10-methylene-5,6,7,8-tetrahydrofolate + NADP(+) = (6R)-5,10-methenyltetrahydrofolate + NADPH. The enzyme catalyses (6R)-5,10-methenyltetrahydrofolate + H2O = (6R)-10-formyltetrahydrofolate + H(+). The protein operates within one-carbon metabolism; tetrahydrofolate interconversion. Functionally, catalyzes the oxidation of 5,10-methylenetetrahydrofolate to 5,10-methenyltetrahydrofolate and then the hydrolysis of 5,10-methenyltetrahydrofolate to 10-formyltetrahydrofolate. The polypeptide is Bifunctional protein FolD (Synechococcus elongatus (strain ATCC 33912 / PCC 7942 / FACHB-805) (Anacystis nidulans R2)).